The following is a 500-amino-acid chain: L-arabinose isomerase (500 aa).

4 residues coordinate Mn(2+): E306, E333, H350, and H450.

Belongs to the arabinose isomerase family. Homohexamer. Requires Mn(2+) as cofactor.

It catalyses the reaction beta-L-arabinopyranose = L-ribulose. The protein operates within carbohydrate degradation; L-arabinose degradation via L-ribulose; D-xylulose 5-phosphate from L-arabinose (bacterial route): step 1/3. Functionally, catalyzes the conversion of L-arabinose to L-ribulose. This is L-arabinose isomerase from Escherichia coli O17:K52:H18 (strain UMN026 / ExPEC).